Consider the following 529-residue polypeptide: MAVHRALAAYAISLYVLLPRKSGATDKGAIKFETWEPLCLLTQDFGNLYNRAHKLNLDIDTYVTAAQADQLRLQILLSRASSKIEAAAAAAATAAIAADLAGKAKHVASCKLAATTLTATTGYLHGRIAEFLEVMTAHRGTTNKYGCLSKSRSDNSNSITDSVANLKDKCKLTVQQISPDNKATEQITKAGFTKLTATGGLTSSDLGGSGQAVCMILSTTASEVVNNGNLDEPVPYAGGYLRRKHDLTSDGNDNLATITDSASAPATRAKTDPYLQIWRAFKNLEDCESTFTSGYSRPSPETLKAADETKTAIKNYVVQKEGKYDQATDKEDDYKNLDKIFKDGKDFYPQKLWDAMDKKDLLKDATQTNEIKKLADITDRSELNKVLLYYTRQKEQTLTKELKEAQEKATQANQNDAAAKAAEDSCNKLVGGEKCNADKKCSYETETDGTKKCKFNATKAEKSGAPVTQAQTVGETEATPEKCKGKDAKTCGTTQGCKWEGETCKDSSILVTKKFALTVVSAAFVALLF.

The first 24 residues, M1 to A24, serve as a signal peptide directing secretion. Disulfide bonds link C39–C170 and C147–C214. N456 is a glycosylation site (N-linked (GlcNAc...) (high mannose) asparagine). D506 carries GPI-anchor amidated aspartate lipidation. Residues S507 to F529 constitute a propeptide, removed in mature form.

Post-translationally, N-glycosylated; glycan is composed of 6 to 9 mannose residues.

Its subcellular location is the cell membrane. Functionally, VSG forms a coat on the surface of the parasite. The trypanosome evades the immune response of the host by expressing a series of antigenically distinct VSGs from an estimated 1000 VSG genes. This is Variant surface glycoprotein MITAT 1.6 from Trypanosoma brucei brucei.